A 232-amino-acid chain; its full sequence is Ribonuclease P protein component 3 (232 aa).

This sequence belongs to the eukaryotic/archaeal RNase P protein component 3 family. As to quaternary structure, consists of a catalytic RNA component and at least 5 protein subunits.

Its subcellular location is the cytoplasm. It catalyses the reaction Endonucleolytic cleavage of RNA, removing 5'-extranucleotides from tRNA precursor.. Its function is as follows. Part of ribonuclease P, a protein complex that generates mature tRNA molecules by cleaving their 5'-ends. This Methanococcus maripaludis (strain DSM 14266 / JCM 13030 / NBRC 101832 / S2 / LL) protein is Ribonuclease P protein component 3.